The primary structure comprises 180 residues: Colicin-E5 (180 aa).

Disordered stretches follow at residues 24–143 and 155–180; these read AQTD…GSPG and VTQISDKTDPGWVDDSRIQWGNKNDQ. The segment covering 54–76 has biased composition (basic and acidic residues); sequence ESRKKKEDNKRDAEGKLNDELAK. Residues 74-180 are nuclease; it reads LAKNKGKIPG…RIQWGNKNDQ (107 aa). The segment covering 106–116 has biased composition (polar residues); sequence NTVSNGATGTS. Residues 160 to 171 show a composition bias toward basic and acidic residues; it reads DKTDPGWVDDSR.

This sequence belongs to the colicin/pyosin nuclease family.

Colicins are polypeptide toxins produced by and active against E.coli and closely related bacteria. This colicin is an endonuclease. The protein is Colicin-E5 (col) of Escherichia coli.